The sequence spans 124 residues: Small ribosomal subunit protein uS12 (124 aa).

A disordered region spans residues 1-20 (MPTIQQLVRKGRTPKVVKTK). Residues 9 to 18 (RKGRTPKVVK) show a composition bias toward basic residues. Asp-89 carries the post-translational modification 3-methylthioaspartic acid.

Belongs to the universal ribosomal protein uS12 family. As to quaternary structure, part of the 30S ribosomal subunit. Contacts proteins S8 and S17. May interact with IF1 in the 30S initiation complex.

With S4 and S5 plays an important role in translational accuracy. Functionally, interacts with and stabilizes bases of the 16S rRNA that are involved in tRNA selection in the A site and with the mRNA backbone. Located at the interface of the 30S and 50S subunits, it traverses the body of the 30S subunit contacting proteins on the other side and probably holding the rRNA structure together. The combined cluster of proteins S8, S12 and S17 appears to hold together the shoulder and platform of the 30S subunit. The polypeptide is Small ribosomal subunit protein uS12 (Clavibacter michiganensis subsp. michiganensis (strain NCPPB 382)).